Here is a 146-residue protein sequence, read N- to C-terminus: Peptide methionine sulfoxide reductase MsrB (146 aa).

The region spanning 6–129 is the MsrB domain; sequence SAEAIAKLSA…NSASLRFVPK (124 aa). The Nucleophile role is filled by Cys118.

It belongs to the MsrB Met sulfoxide reductase family.

The enzyme catalyses L-methionyl-[protein] + [thioredoxin]-disulfide + H2O = L-methionyl-(R)-S-oxide-[protein] + [thioredoxin]-dithiol. This is Peptide methionine sulfoxide reductase MsrB from Brucella melitensis biotype 1 (strain ATCC 23456 / CCUG 17765 / NCTC 10094 / 16M).